The following is a 440-amino-acid chain: Exosome complex component RRP45 (440 aa).

Position 65 is a phosphoserine (S65). At K297 the chain carries N6-acetyllysine; alternate. K297 is covalently cross-linked (Glycyl lysine isopeptide (Lys-Gly) (interchain with G-Cter in SUMO1); alternate). K297 is covalently cross-linked (Glycyl lysine isopeptide (Lys-Gly) (interchain with G-Cter in SUMO2); alternate). A phosphoserine mark is found at S306 and S346. Residues 341-362 (EGIENSWGHLEDSEKEDEDEGG) form a disordered region. Over residues 353-362 (SEKEDEDEGG) the composition is skewed to acidic residues. Phosphoserine occurs at positions 393 and 395. The segment at 404–440 (EPDKNPKKIRTQTISATQVKAPSKKPVKKRKKKRAAN) is disordered. Residues 425–440 (PSKKPVKKRKKKRAAN) show a composition bias toward basic residues.

It belongs to the RNase PH family. In terms of assembly, component of the RNA exosome core complex (Exo-9), composed of EXOSC1, EXOSC2, EXOSC3, EXOSC4, EXOSC5, EXOSC6, EXOSC7, EXOSC8 and EXOSC9; within the complex interacts with EXOSC3, EXOSC4, EXOSC5 and DIS3. The catalytically inactive RNA exosome core complex (Exo-9) associates with the catalytic subunit EXOSC10/RRP6. Exo-9 may associate with DIS3 to form the nucleolar exosome complex, or DIS3L to form the cytoplasmic exosome complex. Exo-9 is formed by a hexameric base ring consisting of the heterodimers EXOSC4-EXOSC9, EXOSC5-EXOSC8 and EXOSC6-EXOSC7, and a cap ring consisting of EXOSC1, EXOSC2 and EXOSC3. The RNA exosome complex associates with cofactors C1D/RRP47, MPHOSPH6/MPP6 and MTREX/MTR4. Interacts (via C-terminus region) with SETX (via N-terminus domain); the interaction enhances SETX sumoylation. Interacts with DIS3; the interaction is direct.

The protein resides in the cytoplasm. Its subcellular location is the nucleus. The protein localises to the nucleolus. It localises to the nucleoplasm. In terms of biological role, non-catalytic component of the RNA exosome complex which has 3'-&gt;5' exoribonuclease activity and participates in a multitude of cellular RNA processing and degradation events. In the nucleus, the RNA exosome complex is involved in proper maturation of stable RNA species such as rRNA, snRNA and snoRNA, in the elimination of RNA processing by-products and non-coding 'pervasive' transcripts, such as antisense RNA species and promoter-upstream transcripts (PROMPTs), and of mRNAs with processing defects, thereby limiting or excluding their export to the cytoplasm. The RNA exosome may be involved in Ig class switch recombination (CSR) and/or Ig variable region somatic hypermutation (SHM) by targeting AICDA deamination activity to transcribed dsDNA substrates. In the cytoplasm, the RNA exosome complex is involved in general mRNA turnover and specifically degrades inherently unstable mRNAs containing AU-rich elements (AREs) within their 3' untranslated regions, and in RNA surveillance pathways, preventing translation of aberrant mRNAs. It seems to be involved in degradation of histone mRNA. The catalytic inactive RNA exosome core complex of 9 subunits (Exo-9) is proposed to play a pivotal role in the binding and presentation of RNA for ribonucleolysis, and to serve as a scaffold for the association with catalytic subunits and accessory proteins or complexes. EXOSC9 binds to ARE-containing RNAs. The sequence is that of Exosome complex component RRP45 (EXOSC9) from Bos taurus (Bovine).